The sequence spans 265 residues: Elongation factor 1-delta (265 aa).

Polar residues predominate over residues 31 to 54 (MGSASNKPHNSPQSAASALSNSGD). Disordered stretches follow at residues 31–64 (MGSA…RVAN) and 118–155 (KVQV…DAEA). Residues 130-153 (GTGEDDDDDDDIDLFGSDNEEEDA) are compositionally biased toward acidic residues.

This sequence belongs to the EF-1-beta/EF-1-delta family. EF-1 is composed of 4 subunits: alpha, beta, delta, and gamma.

In terms of biological role, EF-1-beta and EF-1-delta stimulate the exchange of GDP bound to EF-1-alpha to GTP. In Xenopus laevis (African clawed frog), this protein is Elongation factor 1-delta (eef1d).